Here is a 270-residue protein sequence, read N- to C-terminus: Cyclic AMP-dependent transcription factor ATF-1 (270 aa).

The tract at residues 1-91 is disordered; that stretch reads MEDSHKSNTS…DGENPGVSAV (91 aa). Polar residues predominate over residues 9-21; that stretch reads TSETAPQSGSTVQ. A KID domain is found at 31–90; the sequence is QVSSLSESEESQDSSDSIGSSQKTHGILARRPSYRKILKDLSSEDIRGRKGDGENPGVSA. Ser-63 carries the phosphoserine; by CaMK1, CDK3, RPS6KA4 and RPS6KA5 modification. Basic and acidic residues predominate over residues 67-83; it reads ILKDLSSEDIRGRKGDG. Ser-197 carries the phosphoserine; by HIPK2 modification. Residues Lys-207 and Lys-214 each participate in a glycyl lysine isopeptide (Lys-Gly) (interchain with G-Cter in SUMO2) cross-link. The bZIP domain maps to 212–270; that stretch reads QLKREIRLMKNREAARECRRKKKEYVKCLENRVAVLENQNKTLIEELKTLKDLYSNKSV. The basic motif stretch occupies residues 214–238; the sequence is KREIRLMKNREAARECRRKKKEYVK. The interval 240-261 is leucine-zipper; sequence LENRVAVLENQNKTLIEELKTL.

This sequence belongs to the bZIP family. ATF subfamily. Binds DNA as a dimer. Interacts with HIPK2 and CDK3. Interacts with MOTS-c, a peptide produced by the mitochondrially encoded 12S rRNA MT-RNR1; the interaction occurs in the nucleus following metabolic stress. Post-translationally, phosphorylated at Ser-197 by HIPK2 in response to genotoxic stress. This phosphorylation promotes transcription repression of FTH1 and other antioxidant detoxification genes. The CDK3-mediated phosphorylation at Ser-63 promotes its transactivation and transcriptional activities. Phosphorylated at Ser-63 by RPS6KA4 and RPS6KA5 in response to mitogenic or stress stimuli.

The protein resides in the nucleus. Functionally, this protein binds the cAMP response element (CRE) (consensus: 5'-GTGACGT[AC][AG]-3'), a sequence present in many viral and cellular promoters. Mediates PKA-induced stimulation of CRE-reporter genes. Represses the expression of FTH1 and other antioxidant detoxification genes. Triggers cell proliferation and transformation. This chain is Cyclic AMP-dependent transcription factor ATF-1 (ATF1), found in Bos taurus (Bovine).